We begin with the raw amino-acid sequence, 359 residues long: Mannose-1-phosphate guanylyltransferase catalytic subunit beta (359 aa).

Residues 2-221 (KALILVGGFG…EGFWMDVGQP (220 aa)) form a substrate-binding domain region. D109 is a GDP-alpha-D-mannose binding site. Position 109 (D109) interacts with Mg(2+). The active site involves K161. A GDP-alpha-D-mannose-binding site is contributed by D217. D217 contacts Mg(2+). The segment at 244–359 (ATGNGIIGPV…SSIPEPEIIM (116 aa)) is hexapeptide repeat domain.

Belongs to the transferase hexapeptide repeat family. As to quaternary structure, component of the GMPPA-GMPPB mannose-1-phosphate guanylyltransferase complex composed of 4 GMPPA subunits and 8 gmppB subunits; the complex is organized into three layers, a central layer made up of 2 gmppA dimers sandwiched between two layers each made up of 2 gmppB dimers. gmppB catalytic activity is reduced when part of the complex and binding of GDP-alpha-D-Mannose by gmppA induces allosteric feedback inhibition of gmppB. Requires Mg(2+) as cofactor.

The catalysed reaction is alpha-D-mannose 1-phosphate + GTP + H(+) = GDP-alpha-D-mannose + diphosphate. The protein operates within nucleotide-sugar biosynthesis; GDP-alpha-D-mannose biosynthesis; GDP-alpha-D-mannose from alpha-D-mannose 1-phosphate (GTP route): step 1/1. Its activity is regulated as follows. Enzyme activity is reduced by incorporation into the GMPPA-GMPPB mannose-1-phosphate guanylyltransferase complex. Allosterically inhibited, when part of the GMPPA-GMPPB complex, by GDP-alpha-D-mannose binding to GMPPA. Its function is as follows. Catalytic subunit of the GMPPA-GMPPB mannose-1-phosphate guanylyltransferase complex. Catalyzes the formation of GDP-mannose, an essential precursor of glycan moieties of glycoproteins and glycolipids. Can catalyze the reverse reaction in vitro. Together with GMPPA regulates GDP-alpha-D-mannose levels. The chain is Mannose-1-phosphate guanylyltransferase catalytic subunit beta (gmppB) from Dictyostelium discoideum (Social amoeba).